The following is a 244-amino-acid chain: Thiol S-methyltransferase TMT1B (244 aa).

The first 23 residues, methionine 1–alanine 23, serve as a signal peptide directing secretion.

The protein belongs to the methyltransferase superfamily. In terms of tissue distribution, highly expressed in liver and kidney. No expression in testis, heart, lung, brain, spleen or cultured fibroblasts.

It localises to the endoplasmic reticulum membrane. The protein resides in the lipid droplet. The protein localises to the microsome. It is found in the cytoplasm. Its subcellular location is the cytosol. The enzyme catalyses a thiol + S-adenosyl-L-methionine = a methyl thioether + S-adenosyl-L-homocysteine + H(+). In terms of biological role, thiol S-methyltransferase that catalyzes the transfer of a methyl group from S-adenosyl-L-methionine to alkyl and phenolic thiol-containing acceptor substrates. Together with TMT1B accounts for most of S-thiol methylation activity in the endoplasmic reticulum of hepatocytes. Selectively methylates S-centered nucleophiles from metabolites such as hydrogen sulfide and dithiothreitol. The sequence is that of Thiol S-methyltransferase TMT1B (Tmt1b) from Rattus norvegicus (Rat).